A 246-amino-acid chain; its full sequence is Probable aquaporin AqpM (246 aa).

Topologically, residues 1–12 (MTMTLAKRFTAE) are cytoplasmic. Residues 13-33 (VVGTFILVFFGPGAAVITLMI) traverse the membrane as a helical segment. Topologically, residues 34–56 (ANGADKPNEFNIGIGALGGLGDW) are extracellular. Residues 57 to 77 (FAIGMAFALAIAAVIYSLGRI) form a helical membrane-spanning segment. The Cytoplasmic segment spans residues 78-104 (SGAHINPAVTIALWSIGRFPGREVVPY). The NPA 1 motif lies at 83–85 (NPA). The helical transmembrane segment at 105–125 (IVAQFIGAALGSLLFLACVGP) threads the bilayer. The Extracellular segment spans residues 126 to 146 (AAATVGGLGATAPFPGIGYGQ). The chain crosses the membrane as a helical span at residues 147–167 (AILTEAIGTFLLMLVIMGVAV). The Cytoplasmic portion of the chain corresponds to 168 to 173 (DERAPP). A helical transmembrane segment spans residues 174–194 (GFAGLVIGLTVGGIITTIGNI). The Extracellular segment spans residues 195-217 (TGSSLNPARTFGPYLGDSLMGIN). The NPA 2 motif lies at 200-202 (NPA). A helical transmembrane segment spans residues 218–238 (LWQYFPIYVIGPIVGAVAAAW). Residues 239-246 (LYNYLAKE) lie on the Cytoplasmic side of the membrane.

Belongs to the MIP/aquaporin (TC 1.A.8) family.

Its subcellular location is the cell membrane. Channel that permits osmotically driven movement of water in both directions. The protein is Probable aquaporin AqpM (aqpM) of Archaeoglobus fulgidus (strain ATCC 49558 / DSM 4304 / JCM 9628 / NBRC 100126 / VC-16).